A 147-amino-acid polypeptide reads, in one-letter code: Large ribosomal subunit protein uL13 (147 aa).

The protein belongs to the universal ribosomal protein uL13 family. As to quaternary structure, part of the 50S ribosomal subunit.

Its function is as follows. This protein is one of the early assembly proteins of the 50S ribosomal subunit, although it is not seen to bind rRNA by itself. It is important during the early stages of 50S assembly. This Paenarthrobacter aurescens (strain TC1) protein is Large ribosomal subunit protein uL13.